The chain runs to 279 residues: Large ribosomal subunit protein uL2 (279 aa).

Disordered stretches follow at residues 1–59 (MGIR…GGHK) and 224–279 (VAMN…KNKR). Composition is skewed to basic residues over residues 50 to 59 (TTRHKGGGHK) and 269 to 279 (VRRRRTGKNKR).

This sequence belongs to the universal ribosomal protein uL2 family. In terms of assembly, part of the 50S ribosomal subunit. Forms a bridge to the 30S subunit in the 70S ribosome.

In terms of biological role, one of the primary rRNA binding proteins. Required for association of the 30S and 50S subunits to form the 70S ribosome, for tRNA binding and peptide bond formation. It has been suggested to have peptidyltransferase activity; this is somewhat controversial. Makes several contacts with the 16S rRNA in the 70S ribosome. The polypeptide is Large ribosomal subunit protein uL2 (Arthrobacter sp. (strain FB24)).